A 707-amino-acid polypeptide reads, in one-letter code: Protein kinase C theta type (707 aa).

One can recognise a C2 domain in the interval 1–107; it reads MSPFLRIGLS…KNNGRTEIWL (107 aa). Position 90 is a phosphotyrosine; by LCK (Tyr90). The segment at 159–209 adopts a Phorbol-ester/DAG-type 1 zinc-finger fold; sequence CHEFTATFFPQPTFCSVCHEFVWGLNKQGYQCRQCNAAIHKKCIDKVIAKC. Thr219 is subject to Phosphothreonine; by autocatalysis. The Phorbol-ester/DAG-type 2 zinc-finger motif lies at 231–281; the sequence is PHRFKVYNYKSPTFCEHCGTLLWGLARQGLKCDACGMNVHHRCQTKVANLC. Residues 327 to 365 are disordered; the sequence is ETRPPCVPTPGKREPQGISWDSPLDGSNKSAGPPEPEVS. Phosphoserine is present on Ser348. The 255-residue stretch at 380-634 folds into the Protein kinase domain; the sequence is FILHKMLGKG…RGDIRQHPLF (255 aa). ATP-binding positions include 386–394 and Lys409; that span reads LGKGSFGKV. The active-site Proton acceptor is Asp504. A Phosphothreonine; by PDPK1 modification is found at Thr538. In terms of domain architecture, AGC-kinase C-terminal spans 635 to 706; it reads REINWEELER…INPGMETLIC (72 aa). Ser676 is modified (phosphoserine; by autocatalysis). Ser685 is subject to Phosphoserine. At Ser695 the chain carries Phosphoserine; by autocatalysis.

The protein belongs to the protein kinase superfamily. AGC Ser/Thr protein kinase family. PKC subfamily. Part of a membrane raft complex composed at least of BCL10, CARD11, MALT1 and IKBKB. Interacts with GLRX3 (via N-terminus). Interacts with ECT2. Interacts with CCDC88A/GIV; the interaction leads to phosphorylation of CCDC88A and inhibition of its guanine nucleotide exchange factor activity. Interacts with CD28. The cofactor is Mg(2+). In terms of processing, autophosphorylation at Thr-219 is required for targeting to the TCR and cellular function of PRKCQ upon antigen receptor ligation. Following TCR stimulation, phosphorylated at Tyr-90 and Ser-685. T-lymphocytes and skeletal muscle.

Its subcellular location is the cytoplasm. The protein localises to the cell membrane. The catalysed reaction is L-seryl-[protein] + ATP = O-phospho-L-seryl-[protein] + ADP + H(+). It catalyses the reaction L-threonyl-[protein] + ATP = O-phospho-L-threonyl-[protein] + ADP + H(+). With respect to regulation, novel PKCs (PRKCD, PRKCE, PRKCH and PRKCQ) are calcium-insensitive, but activated by diacylglycerol (DAG) and phosphatidylserine. Three specific sites; Thr-538 (activation loop of the kinase domain), Ser-676 (turn motif) and Ser-695 (hydrophobic region), need to be phosphorylated for its full activation. In terms of biological role, calcium-independent, phospholipid- and diacylglycerol (DAG)-dependent serine/threonine-protein kinase that mediates non-redundant functions in T-cell receptor (TCR) signaling, including T-cells activation, proliferation, differentiation and survival, by mediating activation of multiple transcription factors such as NF-kappa-B, JUN, NFATC1 and NFATC2. In TCR-CD3/CD28-co-stimulated T-cells, is required for the activation of NF-kappa-B and JUN, which in turn are essential for IL2 production, and participates in the calcium-dependent NFATC1 and NFATC2 transactivation. Mediates the activation of the canonical NF-kappa-B pathway (NFKB1) by direct phosphorylation of CARD11 on several serine residues, inducing CARD11 association with lipid rafts and recruitment of the BCL10-MALT1 complex, which then activates IKK complex, resulting in nuclear translocation and activation of NFKB1. May also play an indirect role in activation of the non-canonical NF-kappa-B (NFKB2) pathway. In the signaling pathway leading to JUN activation, acts by phosphorylating the mediator STK39/SPAK and may not act through MAP kinases signaling. Plays a critical role in TCR/CD28-induced NFATC1 and NFATC2 transactivation by participating in the regulation of reduced inositol 1,4,5-trisphosphate generation and intracellular calcium mobilization. After costimulation of T-cells through CD28 can phosphorylate CBLB and is required for the ubiquitination and subsequent degradation of CBLB, which is a prerequisite for the activation of TCR. During T-cells differentiation, plays an important role in the development of T-helper 2 (Th2) cells following immune and inflammatory responses, and, in the development of inflammatory autoimmune diseases, is necessary for the activation of IL17-producing Th17 cells. May play a minor role in Th1 response. Upon TCR stimulation, mediates T-cell protective survival signal by phosphorylating BAD, thus protecting T-cells from BAD-induced apoptosis, and by up-regulating BCL-X(L)/BCL2L1 levels through NF-kappa-B and JUN pathways. In platelets, regulates signal transduction downstream of the ITGA2B, CD36/GP4, F2R/PAR1 and F2RL3/PAR4 receptors, playing a positive role in 'outside-in' signaling and granule secretion signal transduction. May relay signals from the activated ITGA2B receptor by regulating the uncoupling of WASP and WIPF1, thereby permitting the regulation of actin filament nucleation and branching activity of the Arp2/3 complex. May mediate inhibitory effects of free fatty acids on insulin signaling by phosphorylating IRS1, which in turn blocks IRS1 tyrosine phosphorylation and downstream activation of the PI3K/AKT pathway. Phosphorylates MSN (moesin) in the presence of phosphatidylglycerol or phosphatidylinositol. Phosphorylates PDPK1 at 'Ser-504' and 'Ser-532' and negatively regulates its ability to phosphorylate PKB/AKT1. Phosphorylates CCDC88A/GIV and inhibits its guanine nucleotide exchange factor activity. Phosphorylates and activates LRRK1, which phosphorylates RAB proteins involved in intracellular trafficking. In Mus musculus (Mouse), this protein is Protein kinase C theta type (Prkcq).